Reading from the N-terminus, the 210-residue chain is Synaptosomal-associated protein 25 (210 aa).

The disordered stretch occupies residues 1–23 (MENSVENSMDPRSEQEEMQRCAD). Over residues 9–20 (MDPRSEQEEMQR) the composition is skewed to basic and acidic residues. T-SNARE coiled-coil homology domains follow at residues 23-85 (DQIT…LSDL) and 147-209 (DARE…ATKM).

This sequence belongs to the SNAP-25 family.

Its subcellular location is the synapse. It is found in the synaptosome. The protein resides in the cell membrane. In terms of biological role, may play an important role in the synaptic function of specific neuronal systems. Associates with proteins involved in vesicle docking and membrane fusion. The protein is Synaptosomal-associated protein 25 (snap25) of Torpedo marmorata (Marbled electric ray).